A 118-amino-acid chain; its full sequence is Large ribosomal subunit protein uL22c (118 aa).

This sequence belongs to the universal ribosomal protein uL22 family. In terms of assembly, part of the 50S ribosomal subunit.

Its subcellular location is the plastid. The protein localises to the chloroplast. This protein binds specifically to 23S rRNA. Its function is as follows. The globular domain of the protein is located near the polypeptide exit tunnel on the outside of the subunit, while an extended beta-hairpin is found that lines the wall of the exit tunnel in the center of the 70S ribosome. This Physcomitrium patens (Spreading-leaved earth moss) protein is Large ribosomal subunit protein uL22c (rpl22).